Here is a 450-residue protein sequence, read N- to C-terminus: Chromosomal replication initiator protein DnaA (450 aa).

The interval 1 to 73 is domain I, interacts with DnaA modulators; it reads MNTKELWIEV…KNILKKLTGI (73 aa). The tract at residues 73–104 is domain II; it reads IQYNISFELEKNINKQASVISKIDTLTENNNL. Residues 105–326 are domain III, AAA+ region; it reads AYYENYTFEN…GAIKRLLFLA (222 aa). ATP-binding residues include glycine 149, glycine 151, lysine 152, and threonine 153. Positions 327-450 are domain IV, binds dsDNA; that stretch reads VMNKKPNEII…NAIRRKIEGR (124 aa).

This sequence belongs to the DnaA family. As to quaternary structure, oligomerizes as a right-handed, spiral filament on DNA at oriC.

The protein resides in the cytoplasm. Functionally, plays an essential role in the initiation and regulation of chromosomal replication. ATP-DnaA binds to the origin of replication (oriC) to initiate formation of the DNA replication initiation complex once per cell cycle. Binds the DnaA box (a 9 base pair repeat at the origin) and separates the double-stranded (ds)DNA. Forms a right-handed helical filament on oriC DNA; dsDNA binds to the exterior of the filament while single-stranded (ss)DNA is stabiized in the filament's interior. The ATP-DnaA-oriC complex binds and stabilizes one strand of the AT-rich DNA unwinding element (DUE), permitting loading of DNA polymerase. After initiation quickly degrades to an ADP-DnaA complex that is not apt for DNA replication. Binds acidic phospholipids. This Spiroplasma citri protein is Chromosomal replication initiator protein DnaA.